We begin with the raw amino-acid sequence, 138 residues long: Fluoride-specific ion channel FluC (138 aa).

Transmembrane regions (helical) follow at residues F34–A54, M60–M80, F88–V108, and L112–M132. 2 residues coordinate Na(+): G95 and T98.

The protein belongs to the fluoride channel Fluc/FEX (TC 1.A.43) family.

Its subcellular location is the cell membrane. It carries out the reaction fluoride(in) = fluoride(out). With respect to regulation, na(+) is not transported, but it plays an essential structural role and its presence is essential for fluoride channel function. In terms of biological role, fluoride-specific ion channel. Important for reducing fluoride concentration in the cell, thus reducing its toxicity. This chain is Fluoride-specific ion channel FluC, found in Corynebacterium efficiens (strain DSM 44549 / YS-314 / AJ 12310 / JCM 11189 / NBRC 100395).